We begin with the raw amino-acid sequence, 280 residues long: Phosphate import ATP-binding protein PstB (280 aa).

The ABC transporter domain occupies 34–275; sequence IEVKNLNFFY…PARKETEDYI (242 aa). An ATP-binding site is contributed by 66–73; that stretch reads GPSGCGKS.

It belongs to the ABC transporter superfamily. Phosphate importer (TC 3.A.1.7) family. The complex is composed of two ATP-binding proteins (PstB), two transmembrane proteins (PstC and PstA) and a solute-binding protein (PstS).

It localises to the cell inner membrane. It catalyses the reaction phosphate(out) + ATP + H2O = ADP + 2 phosphate(in) + H(+). Part of the ABC transporter complex PstSACB involved in phosphate import. Responsible for energy coupling to the transport system. The polypeptide is Phosphate import ATP-binding protein PstB (Burkholderia mallei (strain ATCC 23344)).